The chain runs to 433 residues: Urokinase-type plasminogen activator (433 aa).

Residues 1–20 (MKVWLASLFLCALVVKNSEG) form the signal peptide. Residues 28 to 64 (DESNCGCQNGGVCVSYKYFSRIRRCSCPRKFQGEHCE) form the EGF-like domain. Cystine bridges form between C32–C40, C34–C52, C54–C63, C71–C152, C92–C134, and C123–C147. The interval 35-58 (QNGGVCVSYKYFSRIRRCSCPRKF) is binds urokinase plasminogen activator surface receptor. One can recognise a Kringle domain in the interval 71 to 152 (CYHGNGDSYR…FVQECMVHDC (82 aa)). A connecting peptide region spans residues 153 to 179 (SLSKKPSSSVDQQGFQCGQKALRPRFK). S159 carries the post-translational modification Phosphoserine. 6 disulfides stabilise this stretch: C169-C301, C211-C227, C219-C290, C315-C384, C347-C363, and C374-C402. Residues 180–426 (IVGGEFTEVE…FLDWIQSHIG (247 aa)) enclose the Peptidase S1 domain. Active-site charge relay system residues include H226 and D277. The Charge relay system role is filled by S378.

Belongs to the peptidase S1 family. In terms of assembly, found in high and low molecular mass forms. Each consists of two chains, A and B. The high molecular mass form contains a long chain A which is cleaved to yield a short chain A. Forms heterodimer with SERPINA5. Binds LRP1B; binding is followed by internalization and degradation. Interacts with MRC2. Interacts with PLAUR. In complex with SERPINE1, interacts with PLAUR/uPAR. Interacts with SORL1 and LRP1, either alone or in complex with SERPINE1; these interactions are abolished in the presence of LRPAP1/RAP. The ternary complex composed of PLAUR-PLAU-PAI1 also interacts with SORLA. Post-translationally, produced as an inactive single-chain protein (pro-uPA or sc-uPA), is processed into the active disulfide-linked two-chain form of PLAU/uPA by a proteolytic event mediated, at least, by TMPRSS4.

It is found in the secreted. The catalysed reaction is Specific cleavage of Arg-|-Val bond in plasminogen to form plasmin.. Its activity is regulated as follows. Inhibited by SERPINA5. Inhibited by SERPINE1. Specifically cleaves the zymogen plasminogen to form the active enzyme plasmin. This chain is Urokinase-type plasminogen activator (Plau), found in Mus musculus (Mouse).